The following is a 490-amino-acid chain: Homoserine O-acetyltransferase (490 aa).

The AB hydrolase-1 domain occupies 48–354 (NVILVCHALT…NSEYGHDAFL (307 aa)). Catalysis depends on Ser153, which acts as the Nucleophile. Residue Arg223 coordinates substrate. Residues Asp317 and His350 contribute to the active site. Asp351 serves as a coordination point for substrate. 2 consecutive CBS domains span residues 377 to 434 (MSHT…ANSI) and 438 to 490 (MTKN…LYEK).

The protein belongs to the AB hydrolase superfamily. MetX family. In terms of assembly, homodimer.

It localises to the cytoplasm. The catalysed reaction is L-homoserine + acetyl-CoA = O-acetyl-L-homoserine + CoA. It participates in amino-acid biosynthesis; L-methionine biosynthesis via de novo pathway; O-acetyl-L-homoserine from L-homoserine: step 1/1. Its function is as follows. Transfers an acetyl group from acetyl-CoA to L-homoserine, forming acetyl-L-homoserine. This is Homoserine O-acetyltransferase from Methanosphaera stadtmanae (strain ATCC 43021 / DSM 3091 / JCM 11832 / MCB-3).